The following is a 207-amino-acid chain: GTP cyclohydrolase-2 (207 aa).

49-53 provides a ligand contact to GTP; the sequence is RTHSE. The Zn(2+) site is built by cysteine 54, cysteine 65, and cysteine 67. Residues glutamine 70, 92–94, and threonine 114 contribute to the GTP site; that span reads EGR. Aspartate 126 acts as the Proton acceptor in catalysis. Residue arginine 128 is the Nucleophile of the active site. Threonine 149 and lysine 154 together coordinate GTP.

Belongs to the GTP cyclohydrolase II family. Requires Zn(2+) as cofactor.

It carries out the reaction GTP + 4 H2O = 2,5-diamino-6-hydroxy-4-(5-phosphoribosylamino)-pyrimidine + formate + 2 phosphate + 3 H(+). The protein operates within cofactor biosynthesis; riboflavin biosynthesis; 5-amino-6-(D-ribitylamino)uracil from GTP: step 1/4. In terms of biological role, catalyzes the conversion of GTP to 2,5-diamino-6-ribosylamino-4(3H)-pyrimidinone 5'-phosphate (DARP), formate and pyrophosphate. The chain is GTP cyclohydrolase-2 from Hahella chejuensis (strain KCTC 2396).